The sequence spans 314 residues: WD repeat domain-containing protein 83 (314 aa).

WD repeat units lie at residues C23 to T62, G65 to K104, G107 to I146, E151 to D188, Y189 to E228, G231 to K272, and V275 to G313.

It belongs to the WD repeat MORG1 family.

It localises to the cytoplasm. Molecular scaffold protein for various multimeric protein complexes. Acts as a module in the assembly of a multicomponent scaffold for the ERK pathway, linking ERK responses to specific agonists. Also involved in response to hypoxia by acting as a negative regulator of HIF1A/HIF-1-alpha. In Xenopus laevis (African clawed frog), this protein is WD repeat domain-containing protein 83 (wdr83).